A 194-amino-acid polypeptide reads, in one-letter code: Xanthine phosphoribosyltransferase (194 aa).

Xanthine contacts are provided by leucine 20 and asparagine 27. Residue 128 to 132 (ANGQA) participates in 5-phospho-alpha-D-ribose 1-diphosphate binding. Xanthine is bound at residue lysine 156.

It belongs to the purine/pyrimidine phosphoribosyltransferase family. Xpt subfamily. As to quaternary structure, homodimer.

Its subcellular location is the cytoplasm. It carries out the reaction XMP + diphosphate = xanthine + 5-phospho-alpha-D-ribose 1-diphosphate. Its pathway is purine metabolism; XMP biosynthesis via salvage pathway; XMP from xanthine: step 1/1. Its function is as follows. Converts the preformed base xanthine, a product of nucleic acid breakdown, to xanthosine 5'-monophosphate (XMP), so it can be reused for RNA or DNA synthesis. This Geobacillus thermodenitrificans (strain NG80-2) protein is Xanthine phosphoribosyltransferase.